We begin with the raw amino-acid sequence, 280 residues long: MRLILISGLSGSGKSVALRALEDSGFYCVDNLPATMLPEAMAMYDDFGYQDIAISVDTRSGPSLGALPQVVEGLKTQGIDVRLLFLEAKPETLVKRFSETRRRHPLSGSGITVEESILLEQEMLADVLELGTRIDTSELSANALRSWVRELVDADGNRLTLIFESFGFKHGVPQDADFVFDARCLPNPYYDPQLRPFTGRDEPIIDFFSGNKAVAEMIADIQAMIAKWLPCYGKENRSYLTVAVGCTGGQHRSVYIIENLARAFSDRQVLVRHRQLYREH.

Position 8 to 15 (8 to 15) interacts with ATP; the sequence is GLSGSGKS. Position 57-60 (57-60) interacts with GTP; it reads DTRS.

Belongs to the RapZ-like family.

Functionally, displays ATPase and GTPase activities. This is Nucleotide-binding protein CV_3336 from Chromobacterium violaceum (strain ATCC 12472 / DSM 30191 / JCM 1249 / CCUG 213 / NBRC 12614 / NCIMB 9131 / NCTC 9757 / MK).